We begin with the raw amino-acid sequence, 158 residues long: 2-C-methyl-D-erythritol 2,4-cyclodiphosphate synthase (158 aa).

2 residues coordinate a divalent metal cation: D8 and H10. 4-CDP-2-C-methyl-D-erythritol 2-phosphate contacts are provided by residues 8–10 (DVH) and 34–35 (HS). H42 is an a divalent metal cation binding site. 4-CDP-2-C-methyl-D-erythritol 2-phosphate contacts are provided by residues 56–58 (DIG), 61–65 (FPDTD), 100–106 (AQVPKMA), 132–135 (TTTE), F139, and R142.

The protein belongs to the IspF family. In terms of assembly, homotrimer. It depends on a divalent metal cation as a cofactor.

It catalyses the reaction 4-CDP-2-C-methyl-D-erythritol 2-phosphate = 2-C-methyl-D-erythritol 2,4-cyclic diphosphate + CMP. It participates in isoprenoid biosynthesis; isopentenyl diphosphate biosynthesis via DXP pathway; isopentenyl diphosphate from 1-deoxy-D-xylulose 5-phosphate: step 4/6. In terms of biological role, involved in the biosynthesis of isopentenyl diphosphate (IPP) and dimethylallyl diphosphate (DMAPP), two major building blocks of isoprenoid compounds. Catalyzes the conversion of 4-diphosphocytidyl-2-C-methyl-D-erythritol 2-phosphate (CDP-ME2P) to 2-C-methyl-D-erythritol 2,4-cyclodiphosphate (ME-CPP) with a corresponding release of cytidine 5-monophosphate (CMP). The chain is 2-C-methyl-D-erythritol 2,4-cyclodiphosphate synthase from Sodalis glossinidius (strain morsitans).